Here is a 147-residue protein sequence, read N- to C-terminus: Hemoglobin anodic subunit beta (147 aa).

The 146-residue stretch at 2–147 (EWTEDERTAI…VTSALARQYH (146 aa)) folds into the Globin domain. Heme b contacts are provided by His-63 and His-92.

Belongs to the globin family. As to quaternary structure, heterotetramer of two alpha chains and two beta chains. As to expression, red blood cells.

Its function is as follows. Involved in oxygen transport from gills to the various peripheral tissues. The protein is Hemoglobin anodic subunit beta (hbb1) of Anguilla anguilla (European freshwater eel).